The primary structure comprises 174 residues: F-box protein At1g70360 (174 aa).

In terms of domain architecture, F-box spans 136-174 (PPCFISLPRELKHKILESLPGVDIGTLACVSSELRDMAS).

This is F-box protein At1g70360 from Arabidopsis thaliana (Mouse-ear cress).